The following is a 327-amino-acid chain: COP9 signalosome complex subunit 6 (327 aa).

Positions 41 to 174 (VALHPLVILN…VSVFESVIDI (134 aa)) constitute an MPN domain. The interval 211-327 (SGENSTVAEH…IGRRMRGLFF (117 aa)) is interaction with Vpr.

It belongs to the peptidase M67A family. CSN6 subfamily. As to quaternary structure, component of the CSN complex, composed of COPS1/GPS1, COPS2, COPS3, COPS4, COPS5, COPS6, COPS7 (COPS7A or COPS7B), COPS8 and COPS9 isoform 1. In the complex, it probably interacts directly with COPS2, COPS4, COPS5, COPS7 (COPS7A or COPS7B) and COPS9 isoform 1. Interacts with the translation initiation factor EIF3S6. Interacts weakly with RBX1. Directly interacts with COP1 and 14-3-3 protein sigma/SFN. Interacts with ERCC6. In terms of assembly, (Microbial infection) Interacts with the HIV-1 protein Vpr. In terms of tissue distribution, widely expressed.

The protein localises to the nucleus. Its subcellular location is the cytoplasm. It localises to the perinuclear region. Functionally, component of the COP9 signalosome complex (CSN), a complex involved in various cellular and developmental processes. The CSN complex is an essential regulator of the ubiquitin (Ubl) conjugation pathway by mediating the deneddylation of the cullin subunits of SCF-type E3 ligase complexes, leading to decrease the Ubl ligase activity of SCF-type complexes such as SCF, CSA or DDB2. The complex is also involved in phosphorylation of p53/TP53, c-jun/JUN, IkappaBalpha/NFKBIA, ITPK1 and IRF8, possibly via its association with CK2 and PKD kinases. CSN-dependent phosphorylation of TP53 and JUN promotes and protects degradation by the Ubl system, respectively. Has some glucocorticoid receptor-responsive activity. Stabilizes COP1 through reducing COP1 auto-ubiquitination and decelerating COP1 turnover rate, hence regulates the ubiquitination of COP1 targets. The sequence is that of COP9 signalosome complex subunit 6 (COPS6) from Homo sapiens (Human).